The chain runs to 192 residues: Xanthine phosphoribosyltransferase 2 (192 aa).

Leucine 20 and asparagine 27 together coordinate xanthine. 131–135 contributes to the 5-phospho-alpha-D-ribose 1-diphosphate binding site; sequence ANACA. Position 159 (lysine 159) interacts with xanthine.

The protein belongs to the purine/pyrimidine phosphoribosyltransferase family. Xpt subfamily. Homodimer.

The protein resides in the cytoplasm. The enzyme catalyses XMP + diphosphate = xanthine + 5-phospho-alpha-D-ribose 1-diphosphate. Its pathway is purine metabolism; XMP biosynthesis via salvage pathway; XMP from xanthine: step 1/1. Functionally, converts the preformed base xanthine, a product of nucleic acid breakdown, to xanthosine 5'-monophosphate (XMP), so it can be reused for RNA or DNA synthesis. In Clostridium perfringens (strain ATCC 13124 / DSM 756 / JCM 1290 / NCIMB 6125 / NCTC 8237 / Type A), this protein is Xanthine phosphoribosyltransferase 2.